The sequence spans 561 residues: Oligo-1,6-glucosidase (561 aa).

D199 (nucleophile) is an active-site residue. E256 serves as the catalytic Proton donor.

Belongs to the glycosyl hydrolase 13 family.

It localises to the cytoplasm. The enzyme catalyses Hydrolysis of (1-&gt;6)-alpha-D-glucosidic linkages in some oligosaccharides produced from starch and glycogen by alpha-amylase, and in isomaltose.. The protein is Oligo-1,6-glucosidase (malL) of Halalkalibacterium halodurans (strain ATCC BAA-125 / DSM 18197 / FERM 7344 / JCM 9153 / C-125) (Bacillus halodurans).